We begin with the raw amino-acid sequence, 271 residues long: Non-homologous end joining protein Ku (271 aa).

A Ku domain is found at Lys12–Ser194. The tract at residues Glu225–Asn249 is disordered.

The protein belongs to the prokaryotic Ku family. In terms of assembly, homodimer. Interacts with LigD.

Its function is as follows. With LigD forms a non-homologous end joining (NHEJ) DNA repair enzyme, which repairs dsDNA breaks with reduced fidelity. Binds linear dsDNA with 5'- and 3'- overhangs but not closed circular dsDNA nor ssDNA. Recruits and stimulates the ligase activity of LigD. The polypeptide is Non-homologous end joining protein Ku (Methylocella silvestris (strain DSM 15510 / CIP 108128 / LMG 27833 / NCIMB 13906 / BL2)).